A 133-amino-acid chain; its full sequence is Small ribosomal subunit protein uS8 (133 aa).

Belongs to the universal ribosomal protein uS8 family. In terms of assembly, part of the 30S ribosomal subunit. Contacts proteins S5 and S12.

One of the primary rRNA binding proteins, it binds directly to 16S rRNA central domain where it helps coordinate assembly of the platform of the 30S subunit. This is Small ribosomal subunit protein uS8 from Crocosphaera subtropica (strain ATCC 51142 / BH68) (Cyanothece sp. (strain ATCC 51142)).